The primary structure comprises 470 residues: Acetyl-CoA decarbonylase/synthase complex subunit gamma (470 aa).

A 4Fe-4S domain is found at M1–E62. [4Fe-4S] cluster-binding residues include C18, C21, C26, and C43.

As to quaternary structure, heterodimer of delta and gamma chains. The ACDS complex is made up of alpha, epsilon, beta, gamma and delta chains with a probable stoichiometry of (alpha(2)epsilon(2))(4)-beta(8)-(gamma(1)delta(1))(8). It depends on corrinoid as a cofactor. The cofactor is [4Fe-4S] cluster.

The enzyme catalyses 5,6,7,8-tetrahydrosarcinapterin + methyl-Co(III)-[corrinoid Fe-S protein] = 5-methyltetrahydrosarcinapterin + Co(I)-[corrinoid Fe-S protein] + H(+). Functionally, part of a complex that catalyzes the reversible cleavage of acetyl-CoA, allowing autotrophic growth from CO(2). This chain is Acetyl-CoA decarbonylase/synthase complex subunit gamma, found in Archaeoglobus fulgidus (strain ATCC 49558 / DSM 4304 / JCM 9628 / NBRC 100126 / VC-16).